The chain runs to 365 residues: Probable 7-methylxanthine methyltransferase 4 (365 aa).

Tyr18 serves as a coordination point for S-adenosyl-L-homocysteine. Position 25 (Thr25) interacts with theobromine. S-adenosyl-L-homocysteine-binding residues include Cys62, Gln67, Asp99, Leu100, Ser132, and Phe133. 3 residues coordinate theobromine: Tyr150, His153, and Trp154. Mg(2+) is bound by residues Asn170, Asp256, Phe258, and Asn259. Phe311 lines the theobromine pocket.

The protein belongs to the methyltransferase superfamily. Type-7 methyltransferase family. Mg(2+) serves as cofactor.

The enzyme catalyses 7-methylxanthine + S-adenosyl-L-methionine = theobromine + S-adenosyl-L-homocysteine + H(+). The protein operates within alkaloid biosynthesis. In terms of biological role, involved in the biosynthesis of theobromine. The polypeptide is Probable 7-methylxanthine methyltransferase 4 (Theobroma cacao (Cacao)).